A 316-amino-acid chain; its full sequence is RING finger protein 148 (316 aa).

The signal sequence occupies residues 1–12; that stretch reads MLLCVSCLSVNG. Asn56 carries N-linked (GlcNAc...) asparagine glycosylation. The PA domain maps to 84–178; that stretch reads VSGAVVLPEG…GNLKGMELLH (95 aa). The next 2 helical transmembrane spans lie at 173-193 and 204-224; these read GMELLHLIQQGVYVTIIIEVG and VMSLFTFLAATVTYLFLYCAW. The RING-type; atypical zinc finger occupies 269–310; that stretch reads CVVCFDMYKAQDVIRILTCKHFFHKTCIDPWLLAHRTCPMCK.

The protein localises to the membrane. The polypeptide is RING finger protein 148 (Rnf148) (Mus musculus (Mouse)).